The sequence spans 1304 residues: Probable inactive serine/threonine-protein kinase fnkC (1304 aa).

The Protein kinase domain occupies 33-402 (FEIIRILKKD…TNLLLTHKFI (370 aa)). ATP is bound by residues 39 to 47 (LKKDEFSTT) and Lys-68. Positions 208-277 (KDNNNNNNNN…EAEGGGGGGE (70 aa)) are disordered. Residues 210 to 269 (NNNNNNNNNNNNNNNNNNNNNNNNNNNNNNANNSNNNTLNNLSIVNNNSSSSSNDNSSEA) are compositionally biased toward low complexity. FNIP repeat units lie at residues 514–556 (HSKS…LGSD), 710–753 (FNQL…FGRC), 754–797 (FNQP…FGSQ), 798–841 (YNQP…FGES), and 900–943 (YNDI…FGCD). MATH domains lie at 1025 to 1154 (QGSW…RIDA) and 1172 to 1291 (NQAF…NVSI).

It belongs to the protein kinase superfamily. STE Ser/Thr protein kinase family.

This chain is Probable inactive serine/threonine-protein kinase fnkC (fnkC), found in Dictyostelium discoideum (Social amoeba).